Consider the following 344-residue polypeptide: Heat-inducible transcription repressor HrcA (344 aa).

Belongs to the HrcA family.

In terms of biological role, negative regulator of class I heat shock genes (grpE-dnaK-dnaJ and groELS operons). Prevents heat-shock induction of these operons. The protein is Heat-inducible transcription repressor HrcA of Moorella thermoacetica (strain ATCC 39073 / JCM 9320).